The primary structure comprises 182 residues: UPF0149 protein HI_0817 (182 aa).

Belongs to the UPF0149 family.

The polypeptide is UPF0149 protein HI_0817 (Haemophilus influenzae (strain ATCC 51907 / DSM 11121 / KW20 / Rd)).